Here is an 853-residue protein sequence, read N- to C-terminus: E3 ubiquitin-protein ligase ZNRF3 (853 aa).

A signal peptide spans 1 to 28 (MKEPRIRGGLPLVWLWVLLAVAPGESLA). Residues 29–192 (KETAFVEVVL…PRQPTEYFDM (164 aa)) lie on the Extracellular side of the membrane. A helical transmembrane segment spans residues 193 to 213 (GIFLAFFVVVSLVCLILLIKI). Over 214 to 853 (KLKQRRSQNS…GQDCHPTDRD (640 aa)) the chain is Cytoplasmic. The RING-type; atypical zinc finger occupies 266 to 307 (CAICLEKYIDGEELRVIPCTHRFHKRCVDPWLLQNHTCPHCR). 4 disordered regions span residues 583 to 629 (SRSP…RLSS), 650 to 673 (SSGT…RGPE), 685 to 713 (GDPS…GGLY), and 834 to 853 (TGKE…TDRD). Residues 589-607 (TGGGDAPGCGGEGGTGSGR) are compositionally biased toward gly residues. The segment covering 615-629 (HQTFPNSPSRDRLSS) has biased composition (polar residues).

Belongs to the ZNRF3 family.

The protein localises to the cell membrane. It carries out the reaction S-ubiquitinyl-[E2 ubiquitin-conjugating enzyme]-L-cysteine + [acceptor protein]-L-lysine = [E2 ubiquitin-conjugating enzyme]-L-cysteine + N(6)-ubiquitinyl-[acceptor protein]-L-lysine.. Its pathway is protein modification; protein ubiquitination. In terms of biological role, E3 ubiquitin-protein ligase that acts as a negative regulator of the Wnt signaling pathway by mediating the ubiquitination and subsequent degradation of Wnt receptor complex components. Along with RSPO2 and RNF43, constitutes a master switch that governs limb specification. The protein is E3 ubiquitin-protein ligase ZNRF3 (znrf3) of Xenopus tropicalis (Western clawed frog).